Reading from the N-terminus, the 445-residue chain is Tubulin beta-2 chain (445 aa).

Residues Gln-11, Glu-69, Ser-138, Gly-142, Thr-143, Gly-144, Asn-204, and Asn-226 each coordinate GTP. Glu-69 provides a ligand contact to Mg(2+). Residues 424-445 (QYQDATAEDEGEFDEDEEVEEA) form a disordered region. Residues 429–445 (TAEDEGEFDEDEEVEEA) are compositionally biased toward acidic residues.

It belongs to the tubulin family. As to quaternary structure, dimer of alpha and beta chains. A typical microtubule is a hollow water-filled tube with an outer diameter of 25 nm and an inner diameter of 15 nM. Alpha-beta heterodimers associate head-to-tail to form protofilaments running lengthwise along the microtubule wall with the beta-tubulin subunit facing the microtubule plus end conferring a structural polarity. Microtubules usually have 13 protofilaments but different protofilament numbers can be found in some organisms and specialized cells. Requires Mg(2+) as cofactor.

It localises to the cytoplasm. The protein localises to the cytoskeleton. Tubulin is the major constituent of microtubules, a cylinder consisting of laterally associated linear protofilaments composed of alpha- and beta-tubulin heterodimers. Microtubules grow by the addition of GTP-tubulin dimers to the microtubule end, where a stabilizing cap forms. Below the cap, tubulin dimers are in GDP-bound state, owing to GTPase activity of alpha-tubulin. The protein is Tubulin beta-2 chain (TUB-2) of Echinococcus multilocularis (Fox tapeworm).